The sequence spans 131 residues: Insulin-like 3 (131 aa).

Positions Met1–Ala26 are cleaved as a signal peptide. 3 disulfides stabilise this stretch: Cys34/Cys116, Cys46/Cys129, and Cys115/Cys120. Residues Ala58–His103 constitute a propeptide, c peptide like.

Belongs to the insulin family. As to quaternary structure, heterodimer of a B chain and an A chain linked by two disulfide bonds. In terms of tissue distribution, expressed exclusively in prenatal and postnatal Leydig cells.

It is found in the secreted. Functionally, seems to play a role in testicular function. May be a trophic hormone with a role in testicular descent in fetal life. Is a ligand for LGR8 receptor. The chain is Insulin-like 3 (INSL3) from Sus scrofa (Pig).